Here is a 632-residue protein sequence, read N- to C-terminus: Phosphatidylinositol-3,5-bisphosphate 3-phosphatase MTMR8 (632 aa).

The Myotubularin phosphatase domain maps to 126–500 (GWELISVVND…LHFKFWCGMY (375 aa)). Positions 250, 275, and 276 each coordinate a 1,2-diacyl-sn-glycero-3-phospho-(1D-myo-inositol-3,5-bisphosphate). The a 1,2-diacyl-sn-glycero-3-phospho-(1D-myo-inositol-3-phosphate) site is built by asparagine 250, asparagine 275, and isoleucine 276. Cysteine 338 acts as the Phosphocysteine intermediate in catalysis. A 1,2-diacyl-sn-glycero-3-phospho-(1D-myo-inositol-3,5-bisphosphate) contacts are provided by serine 339, aspartate 340, glycine 341, tryptophan 342, aspartate 343, arginine 344, lysine 380, and arginine 384. Residues serine 339, aspartate 340, glycine 341, tryptophan 342, aspartate 343, and arginine 344 each contribute to the a 1,2-diacyl-sn-glycero-3-phospho-(1D-myo-inositol-3-phosphate) site. Serine 339 and aspartate 340 together coordinate phosphate. Positions 342, 343, and 344 each coordinate phosphate. Residue arginine 384 participates in a 1,2-diacyl-sn-glycero-3-phospho-(1D-myo-inositol-3-phosphate) binding. Positions 545 to 632 (LPDPAGPINT…HSKEEVQESS (88 aa)) are disordered. The span at 602–632 (EPAANEHDLSSKDKPVFVETEHSKEEVQESS) shows a compositional bias: basic and acidic residues.

It belongs to the protein-tyrosine phosphatase family. Non-receptor class myotubularin subfamily. As to quaternary structure, homodimer.

It is found in the nucleus envelope. The catalysed reaction is a 1,2-diacyl-sn-glycero-3-phospho-(1D-myo-inositol-3,5-bisphosphate) + H2O = a 1,2-diacyl-sn-glycero-3-phospho-(1D-myo-inositol-5-phosphate) + phosphate. It catalyses the reaction a 1,2-diacyl-sn-glycero-3-phospho-(1D-myo-inositol-3-phosphate) + H2O = a 1,2-diacyl-sn-glycero-3-phospho-(1D-myo-inositol) + phosphate. The enzyme catalyses 1,2-dioctanoyl-sn-glycero-3-phospho-(1D-myo-inositol-3,5-bisphosphate) + H2O = 1,2-dioctanoyl-sn-glycero-3-phospho-(1D-myo-inositol-5-phosphate) + phosphate. In terms of biological role, lipid phosphatase that specifically dephosphorylates the D-3 position of phosphatidylinositol 3-phosphate and phosphatidylinositol 3,5-bisphosphate, generating phosphatidylinositol and phosphatidylinositol 5-phosphate. This is Phosphatidylinositol-3,5-bisphosphate 3-phosphatase MTMR8 (mtmr8) from Danio rerio (Zebrafish).